The chain runs to 592 residues: Arginine--tRNA ligase (592 aa).

The short motif at 134–144 (ANPTGPLHVGH) is the 'HIGH' region element.

This sequence belongs to the class-I aminoacyl-tRNA synthetase family. Monomer.

Its subcellular location is the cytoplasm. The catalysed reaction is tRNA(Arg) + L-arginine + ATP = L-arginyl-tRNA(Arg) + AMP + diphosphate. The sequence is that of Arginine--tRNA ligase from Coxiella burnetii (strain CbuG_Q212) (Coxiella burnetii (strain Q212)).